The primary structure comprises 517 residues: GMP synthase [glutamine-hydrolyzing] (517 aa).

The 192-residue stretch at K11 to N202 folds into the Glutamine amidotransferase type-1 domain. C88 (nucleophile) is an active-site residue. Residues H176 and E178 contribute to the active site. A GMPS ATP-PPase domain is found at W203–R392. S230–S236 serves as a coordination point for ATP.

In terms of assembly, homodimer.

It catalyses the reaction XMP + L-glutamine + ATP + H2O = GMP + L-glutamate + AMP + diphosphate + 2 H(+). Its pathway is purine metabolism; GMP biosynthesis; GMP from XMP (L-Gln route): step 1/1. Functionally, catalyzes the synthesis of GMP from XMP. In Latilactobacillus sakei subsp. sakei (strain 23K) (Lactobacillus sakei subsp. sakei), this protein is GMP synthase [glutamine-hydrolyzing].